Consider the following 73-residue polypeptide: Homeodomain-only protein (73 aa).

A DNA-binding region (homeobox; degenerate) is located at residues 3–62 (TEKSVTPTEEQLEILEYNFCKVNKHPDPTTLCLIAAETGLSEEQTLKWFKQRLAEWRKSE).

The protein localises to the nucleus. It is found in the cytoplasm. Functionally, atypical homeodomain protein which does not bind DNA and is required to modulate cardiac growth and development. May act via an interaction with SRF, leading to modulate the expression of SRF-dependent cardiac-specific genes and cardiac development. May act as a co-chaperone for HSPA1A and HSPA1B chaperone proteins and assist in chaperone-mediated protein refolding. The polypeptide is Homeodomain-only protein (HOPX) (Gallus gallus (Chicken)).